We begin with the raw amino-acid sequence, 432 residues long: Adenosine 3'-phospho 5'-phosphosulfate transporter 1 (432 aa).

9 consecutive transmembrane segments (helical) span residues 5–25, 40–60, 109–129, 154–174, 238–258, 265–285, 299–319, 353–373, and 387–407; these read WWAVVVLAAFPSLGAGGETPE, VVNAAGYASFMVPGYLLVQYF, ALKLLFCATGLQVSYLTWGVL, FLVLMNRVLALIVAGLSCVLC, WEYLTATLISIGVSMFLLSSG, PATTLSGLILLAGYIAFDSFT, SVQMMFGVNFFSCLFTVGSLL, LFIFYTIGQFGAAVFTIIMTL, and GHTVTVVGGLGVAVVFAALLL. Serine 427 is subject to Phosphoserine.

It belongs to the nucleotide-sugar transporter family. SLC35B subfamily. In terms of tissue distribution, highly expressed in the placenta, pancreas, mammary gland and skeletal muscle. Weakly or not expressed in colon, heart and prostate. Expressed in the brain, predominantly in frontal lobe gray matter, subcortical frontal white matter and cerebellum.

It localises to the golgi apparatus membrane. The catalysed reaction is 3'-phosphoadenylyl sulfate(in) + adenosine 3',5'-bisphosphate(out) = 3'-phosphoadenylyl sulfate(out) + adenosine 3',5'-bisphosphate(in). Functionally, probably functions as a 3'-phosphoadenylyl sulfate:adenosine 3',5'-bisphosphate antiporter at the Golgi membranes. Mediates the transport from the cytosol into the lumen of the Golgi of 3'-phosphoadenylyl sulfate/adenosine 3'-phospho 5'-phosphosulfate (PAPS), a universal sulfuryl donor for sulfation events that take place in that compartment. This is Adenosine 3'-phospho 5'-phosphosulfate transporter 1 from Homo sapiens (Human).